The chain runs to 100 residues: SAGA-associated factor 11 (100 aa).

An SGF11-type zinc finger spans residues 73–94 (FQCENCGRSIAGGRFAQHMTKC).

It belongs to the SGF11 family. Component of the 1.8 MDa SAGA transcription coactivator-HAT complex. SAGA is built of 5 distinct domains with specialized functions. Within the SAGA complex, SUS1, SGF11, SGF73 and UBP8 form an additional subcomplex of SAGA called the DUB module (deubiquitination module). Interacts directly with SGF73, SUS1 and UBP8.

It localises to the nucleus. Its function is as follows. Functions as a component of the transcription regulatory histone acetylation (HAT) complex SAGA. At the promoters, SAGA is required for recruitment of the basal transcription machinery. It influences RNA polymerase II transcriptional activity through different activities such as TBP interaction and promoter selectivity, interaction with transcription activators, and chromatin modification through histone acetylation and deubiquitination. SAGA acetylates nucleosomal histone H3 to some extent (to form H3K9ac, H3K14ac, H3K18ac and H3K23ac). SAGA interacts with DNA via upstream activating sequences (UASs). Involved in transcriptional regulation of a subset of SAGA-regulated genes. Within the SAGA complex, participates in a subcomplex, that specifically deubiquitinates histones H2B. The sequence is that of SAGA-associated factor 11 from Debaryomyces hansenii (strain ATCC 36239 / CBS 767 / BCRC 21394 / JCM 1990 / NBRC 0083 / IGC 2968) (Yeast).